Reading from the N-terminus, the 92-residue chain is C-C motif chemokine 3 (92 aa).

The signal sequence occupies residues M1–A26. Intrachain disulfides connect C33/C57 and C34/C73.

The protein belongs to the intercrine beta (chemokine CC) family. In terms of assembly, self-associates. Also heterodimer of MIP-1-alpha(4-69) and MIP-1-beta(3-69). Interacts with CCR1.

It localises to the secreted. Functionally, monokine with inflammatory and chemokinetic properties. Binds to CCR1, CCR4 and CCR5. One of the major HIV-suppressive factors produced by CD8+ T-cells. Recombinant MIP-1-alpha induces a dose-dependent inhibition of different strains of HIV-1, HIV-2, and simian immunodeficiency virus (SIV). This Macaca mulatta (Rhesus macaque) protein is C-C motif chemokine 3 (CCL3).